A 199-amino-acid polypeptide reads, in one-letter code: V-type ATP synthase subunit E (199 aa).

It belongs to the V-ATPase E subunit family.

Its function is as follows. Produces ATP from ADP in the presence of a proton gradient across the membrane. The sequence is that of V-type ATP synthase subunit E (atpE) from Borreliella burgdorferi (strain ATCC 35210 / DSM 4680 / CIP 102532 / B31) (Borrelia burgdorferi).